Here is a 111-residue protein sequence, read N- to C-terminus: Large ribosomal subunit protein P2w (111 aa).

The disordered stretch occupies residues 63–111 (ASVPSGGGVAVSAAPSSGGGGAAAPAEKKEAKKEEKEESDDDMGFSLFE). Residues 88–98 (AEKKEAKKEEK) are compositionally biased toward basic and acidic residues. Position 101 is a phosphoserine (Ser-101).

Belongs to the eukaryotic ribosomal protein P1/P2 family. In terms of assembly, P1 and P2 exist as dimers at the large ribosomal subunit.

In terms of biological role, plays an important role in the elongation step of protein synthesis. In Arabidopsis thaliana (Mouse-ear cress), this protein is Large ribosomal subunit protein P2w (RPP2D).